Here is a 397-residue protein sequence, read N- to C-terminus: Argininosuccinate synthase (397 aa).

An ATP-binding site is contributed by 8–16; it reads AYSGGLDTS. Tyr-87 is an L-citrulline binding site. Position 117 (Gly-117) interacts with ATP. L-aspartate-binding residues include Thr-119, Asn-123, and Asp-124. Asn-123 contributes to the L-citrulline binding site. L-citrulline is bound by residues Arg-127, Ser-175, Glu-259, and Tyr-271.

It belongs to the argininosuccinate synthase family. Type 1 subfamily. As to quaternary structure, homotetramer.

The protein resides in the cytoplasm. It carries out the reaction L-citrulline + L-aspartate + ATP = 2-(N(omega)-L-arginino)succinate + AMP + diphosphate + H(+). It functions in the pathway amino-acid biosynthesis; L-arginine biosynthesis; L-arginine from L-ornithine and carbamoyl phosphate: step 2/3. The chain is Argininosuccinate synthase from Streptomyces clavuligerus.